We begin with the raw amino-acid sequence, 251 residues long: Triosephosphate isomerase (251 aa).

9 to 11 contacts substrate; sequence NWK. The active-site Electrophile is the His95. The active-site Proton acceptor is Glu167. Substrate-binding positions include Gly173, Ser212, and 233 to 234; that span reads GG.

This sequence belongs to the triosephosphate isomerase family. In terms of assembly, homodimer.

Its subcellular location is the cytoplasm. It carries out the reaction D-glyceraldehyde 3-phosphate = dihydroxyacetone phosphate. It participates in carbohydrate biosynthesis; gluconeogenesis. The protein operates within carbohydrate degradation; glycolysis; D-glyceraldehyde 3-phosphate from glycerone phosphate: step 1/1. Involved in the gluconeogenesis. Catalyzes stereospecifically the conversion of dihydroxyacetone phosphate (DHAP) to D-glyceraldehyde-3-phosphate (G3P). This Pseudomonas entomophila (strain L48) protein is Triosephosphate isomerase.